A 662-amino-acid chain; its full sequence is DNA ligase (662 aa).

NAD(+) contacts are provided by residues 31-35 (DKDYD) and 79-80 (SL). Lysine 121 functions as the N6-AMP-lysine intermediate in the catalytic mechanism. NAD(+) contacts are provided by arginine 143, glutamate 177, and lysine 313. Residues cysteine 406, cysteine 409, cysteine 422, and cysteine 428 each contribute to the Zn(2+) site. The BRCT domain maps to 586–662 (VLESPFMGKT…LSEEEFENMI (77 aa)).

Belongs to the NAD-dependent DNA ligase family. LigA subfamily. Mg(2+) is required as a cofactor. It depends on Mn(2+) as a cofactor.

The enzyme catalyses NAD(+) + (deoxyribonucleotide)n-3'-hydroxyl + 5'-phospho-(deoxyribonucleotide)m = (deoxyribonucleotide)n+m + AMP + beta-nicotinamide D-nucleotide.. Functionally, DNA ligase that catalyzes the formation of phosphodiester linkages between 5'-phosphoryl and 3'-hydroxyl groups in double-stranded DNA using NAD as a coenzyme and as the energy source for the reaction. It is essential for DNA replication and repair of damaged DNA. The chain is DNA ligase from Clostridium perfringens (strain 13 / Type A).